Reading from the N-terminus, the 156-residue chain is Inner membrane protein YlaC (156 aa).

Over 1–35 (MTEIQRLLTETIESLNTREKRDNKPRFSISFIRKH) the chain is Cytoplasmic. The chain crosses the membrane as a helical span at residues 36–56 (PGLFIGMYVAFFATLAVMLQS). Residues 57–58 (ET) lie on the Periplasmic side of the membrane. The helical transmembrane segment at 59–79 (LSGSVWLLVVLFILLNGFFFF) threads the bilayer. Residues 80-156 (DVYPRYRYED…FTLARAESTS (77 aa)) are Cytoplasmic-facing.

It localises to the cell inner membrane. The polypeptide is Inner membrane protein YlaC (ylaC) (Escherichia coli (strain K12)).